The chain runs to 843 residues: Ribosome biogenesis protein ERB1 (843 aa).

Disordered stretches follow at residues 36 to 189 and 364 to 419; these read KKAA…RYIY and ADES…REYL. Composition is skewed to acidic residues over residues 77–92, 106–139, and 163–172; these read VDEDPSVVSGDEYDLE, SDSEIELIGDFSSDDGEDDDGEDDDELDSDEVPS, and ESNDLSDDNE. Basic and acidic residues predominate over residues 173 to 183; the sequence is PNYRIEKDANG. Residues 379–396 show a composition bias toward pro residues; the sequence is PKLPPPGYEESYHPPPEY. The span at 397–406 shows a compositional bias: basic and acidic residues; that stretch reads LPDKKEKEEW. 6 WD repeats span residues 487-526, 530-570, 668-706, 709-754, 758-797, and 813-843; these read GHRGRVRSLAIDPTGVWLASGGDDGTVRVWELLTGRQLWS, SDED…LELE, KGGGSPQVAHFHPSKPILFVANQRSIRAYDLSRQTLVKI, PGAR…RPYK, YHQKAIRAVKYHPHYPLFADTSDDGSLQIFHGSVTGDLLS, and TGDLGVLDLDWHPREAWCVSAGADGTCRLWM.

Belongs to the WD repeat BOP1/ERB1 family. In terms of assembly, component of the NOP7 complex, composed of ERB1, NOP7 and YTM1. The complex is held together by ERB1, which interacts with NOP7 via its N-terminal domain and with YTM1 via a high-affinity interaction between the seven-bladed beta-propeller domains of the 2 proteins. The NOP7 complex associates with the 66S pre-ribosome.

The protein resides in the nucleus. The protein localises to the nucleolus. It is found in the nucleoplasm. In terms of biological role, component of the NOP7 complex, which is required for maturation of the 25S and 5.8S ribosomal RNAs and formation of the 60S ribosome. This Coccidioides immitis (strain RS) (Valley fever fungus) protein is Ribosome biogenesis protein ERB1.